Reading from the N-terminus, the 438-residue chain is Histidinol dehydrogenase (438 aa).

The NAD(+) site is built by Y137, Q198, and N221. Substrate contacts are provided by S244, Q266, and H269. Residues Q266 and H269 each contribute to the Zn(2+) site. Residues E334 and H335 each act as proton acceptor in the active site. Residues H335, D368, E422, and H427 each coordinate substrate. D368 serves as a coordination point for Zn(2+). H427 contacts Zn(2+).

Belongs to the histidinol dehydrogenase family. Zn(2+) serves as cofactor.

The catalysed reaction is L-histidinol + 2 NAD(+) + H2O = L-histidine + 2 NADH + 3 H(+). Its pathway is amino-acid biosynthesis; L-histidine biosynthesis; L-histidine from 5-phospho-alpha-D-ribose 1-diphosphate: step 9/9. Functionally, catalyzes the sequential NAD-dependent oxidations of L-histidinol to L-histidinaldehyde and then to L-histidine. This chain is Histidinol dehydrogenase, found in Aromatoleum aromaticum (strain DSM 19018 / LMG 30748 / EbN1) (Azoarcus sp. (strain EbN1)).